We begin with the raw amino-acid sequence, 314 residues long: MFQPAEPGQEWAMEGPRDALKKERLLDDRHDSGLDSMKDEEYEQMVKELREIRLEPQEAPRGAEPWKQQLTEDGDSFLHLAIIHEEKALTMEVVRQVKGDLAFLNFQNNLQQTPLHLAVITNQPEIAEALLEAGCDPELRDFRGNTPLHLACEQGCLASVGVLTQPRGTQHLHSILQATNYNGHTCLHLASIHGYLGIVELLVSLGADVNAQEPCNGRTALHLAVDLQNPDLVSLLLKCGADVNRVTYQGYSPYQLTWGRPSTRIQQQLGQLTLENLQMLPESEDEESYDTESEFTEDELPYDDCVLGGQRLTL.

The segment at 1-41 is disordered; it reads MFQPAEPGQEWAMEGPRDALKKERLLDDRHDSGLDSMKDEE. Residues 15–41 show a composition bias toward basic and acidic residues; sequence GPRDALKKERLLDDRHDSGLDSMKDEE. Residue Lys21 forms a Glycyl lysine isopeptide (Lys-Gly) (interchain with G-Cter in SUMO); alternate linkage. Residue Lys21 forms a Glycyl lysine isopeptide (Lys-Gly) (interchain with G-Cter in ubiquitin); alternate linkage. Lys22 is covalently cross-linked (Glycyl lysine isopeptide (Lys-Gly) (interchain with G-Cter in ubiquitin)). Residues 30–36 carry the Destruction motif motif; sequence HDSGLDS. At Ser32 the chain carries Phosphoserine; by IKKA and IKKB. Residue Ser36 is modified to Phosphoserine; by IKKA, IKKB, IKKE and TBK1. Tyr42 is modified (phosphotyrosine; by Tyr-kinases). Residues 45 to 54 carry the Nuclear export signal motif; sequence MVKELREIRL. The Nuclear import signal signature appears at 110–120; it reads LQQTPLHLAVI. 4 ANK repeats span residues 110–139, 143–172, 182–211, and 216–245; these read LQQT…DPEL, RGNT…TQHL, NGHT…DVNA, and NGRT…DVNR. A (3S)-3-hydroxyasparagine; by HIF1AN mark is found at Asn210 and Asn244. Phosphoserine; by CK2 occurs at positions 283 and 288. Position 291 is a phosphothreonine; by CK2 (Thr291). Ser293 is modified (phosphoserine; by CK2). Thr296 carries the phosphothreonine modification.

This sequence belongs to the NF-kappa-B inhibitor family. Interacts with RELA; the interaction requires the nuclear import signal. Part of a 70-90 kDa complex at least consisting of CHUK, IKBKB, NFKBIA, RELA, ELP1 and MAP3K14. Interacts with NKIRAS1 and NKIRAS2. Interacts with RWDD3; the interaction enhances sumoylation. Interacts with PRMT2. Interacts with PRKACA in platelets; this interaction is disrupted by thrombin and collagen. Interacts with MEFV. Interacts with DDRGK1; positively regulates NFKBIA phosphorylation and degradation. Interacts with HNRNPA2B1; the interaction may be mediated by the RRM2 domain of HNRNPA2B1, and HNRNPA2B1 may interact simultaneously with FAM76B and either NFKBIA or NFKBIE to form a complex. Phosphorylated at Ser-32 and Ser-36 by IKKA/CHUK and IKKB/IKBKB; disables inhibition of NF-kappa-B DNA-binding activity. Phosphorylation at positions 32 and 36 is prerequisite to recognition by the SCF(FBXW11) and SCF(BTRC) complexes, leading to polyubiquitination and subsequent degradation. Post-translationally, polyubiquitinated at Lys-21 and/or Lys-22 following phosphorylation at Ser-32 and Ser-36. Monoubiquitinated at Lys-21 and/or Lys-22 by UBE2D3. Ubiquitin chain elongation is then performed by CDC34 in cooperation with the SCF(FBXW11) E3 ligase complex, building ubiquitin chains from the UBE2D3-primed NFKBIA-linked ubiquitin. The resulting polyubiquitination leads to protein degradation. Also ubiquitinated by the SCF(BTRC) complex following stimulus-dependent phosphorylation at Ser-32 and Ser-36. Deubiquitinated by USP38, leading to NF-kappa-B inhibition. In terms of processing, sumoylated; sumoylation requires the presence of the nuclear import signal. Sumoylation blocks ubiquitination and proteasome-mediated degradation of the protein thereby increasing the protein stability. Hydroxylated by HIF1AN.

It is found in the cytoplasm. It localises to the nucleus. Inhibits the activity of dimeric NF-kappa-B/REL complexes by trapping REL (RELA/p65 and NFKB1/p50) dimers in the cytoplasm by masking their nuclear localization signals. On cellular stimulation by immune and pro-inflammatory responses, becomes phosphorylated promoting ubiquitination and degradation, enabling the dimeric RELA to translocate to the nucleus and activate transcription. The protein is NF-kappa-B inhibitor alpha (NFKBIA) of Sus scrofa (Pig).